The chain runs to 545 residues: MMTGQVPILVLKEGTQREQGKNAQRNNIEAAKAIADAVRTTLGPKGMDKMLVDSIGDIIISNDGATILKEMDVEHPTAKMIVEVSKAQDTAVGDGTTTAVVLSGELLKQAETLLDQGVHPTVISNGYRLAVNEARKIIDEIAEKSTDDATLRKIALTALSGKNTGLSNDFLADLVVKAVNAVAEVRDGKTIVDTANIKVDKKNGGSVNDTQFISGIVIDKEKVHSKMPDVVKNAKIALIDSALEIKKTEIEAKVQISDPSKIQDFLNQETNTFKQMVEKIKKSGANVVLCQKGIDDVAQHYLAKEGIYAVRRVKKSDMEKLAKATGAKIVTDLDDLTPSVLGEAETVEERKIGDDRMTFVMGCKNPKAVSILIRGGTDHVVSEVERALNDAIRVVAITKEDGKFLWGGGAVEAELAMRLAKYANSVGGREQLAIEAFAKALEIIPRTLAENAGIDPINTLIKLKAEHEKGRISVGVDLDNNGVGDMKAKGVVDPLRVKTHALESAVEVATMILRIDDVIASKKSTPPSGQGGQGQGMPGGGMPEY.

Residues K522–Y545 are disordered. The segment covering G529–Y545 has biased composition (gly residues).

This sequence belongs to the TCP-1 chaperonin family. In terms of assembly, forms a Heterooligomeric complex of two stacked eight-membered rings. Post-translationally, the N-terminus is blocked.

Molecular chaperone; binds unfolded polypeptides in vitro, and has a weak ATPase activity. This is Thermosome subunit alpha (thsA) from Thermoplasma acidophilum (strain ATCC 25905 / DSM 1728 / JCM 9062 / NBRC 15155 / AMRC-C165).